Consider the following 346-residue polypeptide: Putative agmatine deiminase (346 aa).

Cys333 serves as the catalytic Amidino-cysteine intermediate.

It belongs to the agmatine deiminase family.

The enzyme catalyses agmatine + H2O = N-carbamoylputrescine + NH4(+). The polypeptide is Putative agmatine deiminase (Legionella pneumophila (strain Paris)).